Consider the following 331-residue polypeptide: NADH-quinone oxidoreductase subunit H (331 aa).

8 helical membrane-spanning segments follow: residues 7-27, 81-101, 114-134, 154-174, 187-207, 238-258, 271-291, and 310-330; these read ALVTIILTVVKAIVVLLAVVI, MIFTLAPVIAMGALLVAFAIV, IGILFFFAMAGLTVYAVLFAG, ISYEVFLALSLMGIVAQVGSF, VWFIIPQFFGFCTFIIAGVAV, FFVGEYIGIVLVSALLATLFF, WLSFFYFAAKTGFFIMLFILI, and VCLPLTLINLLVTGALVLAAA.

Belongs to the complex I subunit 1 family. In terms of assembly, NDH-1 is composed of 13 different subunits. Subunits NuoA, H, J, K, L, M, N constitute the membrane sector of the complex.

The protein resides in the cell inner membrane. The catalysed reaction is a quinone + NADH + 5 H(+)(in) = a quinol + NAD(+) + 4 H(+)(out). Its function is as follows. NDH-1 shuttles electrons from NADH, via FMN and iron-sulfur (Fe-S) centers, to quinones in the respiratory chain. The immediate electron acceptor for the enzyme in this species is believed to be ubiquinone. Couples the redox reaction to proton translocation (for every two electrons transferred, four hydrogen ions are translocated across the cytoplasmic membrane), and thus conserves the redox energy in a proton gradient. This subunit may bind ubiquinone. The sequence is that of NADH-quinone oxidoreductase subunit H from Pseudomonas paraeruginosa (strain DSM 24068 / PA7) (Pseudomonas aeruginosa (strain PA7)).